Here is a 799-residue protein sequence, read N- to C-terminus: Conserved oligomeric Golgi complex subunit 6 (799 aa).

It belongs to the COG6 family.

Its subcellular location is the golgi apparatus membrane. In terms of biological role, acts as a component of the peripheral membrane COG complex that is involved in intra-Golgi protein trafficking. COG is located at the cis-Golgi, and regulates tethering of retrograde intra-Golgi vesicles and possibly a number of other membrane trafficking events. The chain is Conserved oligomeric Golgi complex subunit 6 (COG6) from Scheffersomyces stipitis (strain ATCC 58785 / CBS 6054 / NBRC 10063 / NRRL Y-11545) (Yeast).